We begin with the raw amino-acid sequence, 148 residues long: Large ribosomal subunit protein bL9 (148 aa).

The protein belongs to the bacterial ribosomal protein bL9 family.

Functionally, binds to the 23S rRNA. In Salinispora tropica (strain ATCC BAA-916 / DSM 44818 / JCM 13857 / NBRC 105044 / CNB-440), this protein is Large ribosomal subunit protein bL9.